Reading from the N-terminus, the 414-residue chain is Wilms tumor protein homolog A (414 aa).

Glycyl lysine isopeptide (Lys-Gly) (interchain with G-Cter in SUMO) cross-links involve residues Lys55 and Lys158. The short motif at 217 to 225 is the 9aaTAD element; sequence MTWNQMNLG. C2H2-type zinc fingers lie at residues 288-312, 318-342, and 348-370; these read FMCAYPGCNKRYFKLSHLQMHSRKH, YQCDFKDCERRFSRSDQLKRHQRRH, and FQCKTCQRKFSRSDHLKTHTRTH. 2 important for interaction with target DNA regions span residues 332-346 and 358-366; these read SDQLKRHQRRHTGIK and SRSDHLKTH. The KTS motif motif lies at 373-375; that stretch reads KTS. The C2H2-type 4 zinc finger occupies 379-403; the sequence is FSCRWPSCQKKFARSDELVRHHNMH.

This sequence belongs to the EGR C2H2-type zinc-finger protein family. Expressed around the pronephric anlage and in the pronephros; expression is restricted to the splanchnic mesoderm (the site where the glomus forms) from tailbud stages, and the glomus of early tadpoles. Not expressed in the pronephric tubules or pronephric duct. In tadpoles (stage 38-39), additional expression begins in the heart. Also expressed in the adult kidney (mesonephros).

It localises to the nucleus. The protein localises to the cytoplasm. The protein resides in the nucleus speckle. In terms of biological role, transcription factor required for development of the vascular component of the pronephric kidney, the glomus; may repress tubule-specific gene expression in the portion of the pronephros fated to form the glomus. Recognizes and binds to the DNA sequence 5'-GCG(T/G)GGGCG-3'. Inhibits Wnt-signaling during embryonic development. Function may be isoform-specific: the isoform containing the KTS motif is less effective in inhibiting wnt signaling. The sequence is that of Wilms tumor protein homolog A (wt1-a) from Xenopus laevis (African clawed frog).